The following is a 378-amino-acid chain: Ferredoxin--NADP reductase, root isozyme 1, chloroplastic (378 aa).

The transit peptide at 1–65 directs the protein to the chloroplast; it reads MALSTTPSQM…KRSTICMSLQ (65 aa). One can recognise an FAD-binding FR-type domain in the interval 93-221; that stretch reads KEPYTATIVS…TGPSGKVMLL (129 aa). An intrachain disulfide couples Cys196 to Cys201. Ser197 is subject to Phosphoserine. Thr229 is modified (phosphothreonine). 231 to 249 is an NADP(+) binding site; the sequence is IMIATGTGVAPYRGYLRRM. Positions 349–373 form a coiled coil; the sequence is LKRVAEERGESWEQKLTQLRKNKQW.

This sequence belongs to the ferredoxin--NADP reductase type 1 family. Requires FAD as cofactor. As to expression, expressed in shoots and roots. Less abundant in roots than RFNR2.

Its subcellular location is the plastid. It is found in the chloroplast. The enzyme catalyses 2 reduced [2Fe-2S]-[ferredoxin] + NADP(+) + H(+) = 2 oxidized [2Fe-2S]-[ferredoxin] + NADPH. Maintains the supply of reduced ferredoxin under non-photosynthetic conditions. In Arabidopsis thaliana (Mouse-ear cress), this protein is Ferredoxin--NADP reductase, root isozyme 1, chloroplastic (RFNR1).